We begin with the raw amino-acid sequence, 202 residues long: LexA repressor (202 aa).

The segment at residues 28-48 (RAEIAQQLGFRSPNAAEEHLK) is a DNA-binding region (H-T-H motif). Residues Ser-119 and Lys-156 each act as for autocatalytic cleavage activity in the active site.

This sequence belongs to the peptidase S24 family. As to quaternary structure, homodimer.

It catalyses the reaction Hydrolysis of Ala-|-Gly bond in repressor LexA.. Functionally, represses a number of genes involved in the response to DNA damage (SOS response), including recA and lexA. Binds to the 16 bp palindromic sequence 5'-CTGTATATATATACAG-3'. In the presence of single-stranded DNA, RecA interacts with LexA causing an autocatalytic cleavage which disrupts the DNA-binding part of LexA, leading to derepression of the SOS regulon and eventually DNA repair. The sequence is that of LexA repressor from Pectobacterium carotovorum subsp. carotovorum (Erwinia carotovora subsp. carotovora).